A 201-amino-acid polypeptide reads, in one-letter code: Cytochrome c4 (201 aa).

The signal sequence occupies residues 1–20 (MNKLLVSLLLTLGLTGLAHA). Cys34, Cys37, His38, Met77, Cys130, Cys133, His134, and Met178 together coordinate heme c.

Post-translationally, binds 2 heme c groups covalently per subunit.

The protein localises to the periplasm. Its function is as follows. Diheme, high potential cytochrome c believed to be an intermediate electron donor to terminal oxidation systems. The chain is Cytochrome c4 (cc4) from Pseudomonas aeruginosa (strain ATCC 15692 / DSM 22644 / CIP 104116 / JCM 14847 / LMG 12228 / 1C / PRS 101 / PAO1).